The primary structure comprises 357 residues: Protein-arginine kinase (357 aa).

One can recognise a Phosphagen kinase C-terminal domain in the interval 24-255 (IVISTRLRIA…RQIIEQERVA (232 aa)). Residues 27 to 31 (STRLR), His-92, Arg-126, 177 to 181 (RASVM), and 208 to 213 (RGIYGE) contribute to the ATP site. Residues 338–343 (RDERRA) carry the RDXXRA motif of the pArg binding pocket involved in allosteric regulation motif.

Belongs to the ATP:guanido phosphotransferase family.

The enzyme catalyses L-arginyl-[protein] + ATP = N(omega)-phospho-L-arginyl-[protein] + ADP + H(+). With respect to regulation, appears to be allosterically activated by the binding of pArg-containing polypeptides to the pArg-binding pocket localized in the C-terminal domain of McsB. Functionally, catalyzes the specific phosphorylation of arginine residues in proteins. This Brevibacillus brevis (strain 47 / JCM 6285 / NBRC 100599) protein is Protein-arginine kinase.